A 379-amino-acid chain; its full sequence is Homoserine O-acetyltransferase (379 aa).

Residues 1–24 (MSHDTTPPLPATGAWREGDPPGDR) form a disordered region. An AB hydrolase-1 domain is found at 60–365 (NAVLVLHALT…ASGHDGFLTE (306 aa)). Ser-165 functions as the Nucleophile in the catalytic mechanism. Arg-236 is a substrate binding site. Active-site residues include Asp-329 and His-359. Asp-360 lines the substrate pocket.

This sequence belongs to the AB hydrolase superfamily. MetX family. Homodimer.

It localises to the cytoplasm. The enzyme catalyses L-homoserine + acetyl-CoA = O-acetyl-L-homoserine + CoA. Its pathway is amino-acid biosynthesis; L-methionine biosynthesis via de novo pathway; O-acetyl-L-homoserine from L-homoserine: step 1/1. In terms of biological role, transfers an acetyl group from acetyl-CoA to L-homoserine, forming acetyl-L-homoserine. The protein is Homoserine O-acetyltransferase of Thermobifida fusca (strain YX).